The following is a 380-amino-acid chain: Ubiquitin-like protein 7 (380 aa).

Residues 18-98 (APKSILRLPE…VLRKSWPEPD (81 aa)) enclose the Ubiquitin-like domain. The interval 201 to 313 (PMPGADSSSR…SSSVQSGTPI (113 aa)) is disordered. Ser-230 bears the Phosphoserine mark. Composition is skewed to low complexity over residues 239–255 (SARS…RPAS) and 270–312 (SELA…SGTP). One can recognise a UBA domain in the interval 333–377 (SLQSQWQPQLQQLRDMGIQDDELSLRALQATGGDIQAALELIFAG).

Binds ubiquitin. Interacts with MAVS; this interaction enhances TRIM21-dependent 'Lys-27'-linked polyubiquitination of MAVS. In terms of processing, deubiquitinated by OTUD4 which stabilizes UBL7 expression.

Functionally, interferon-stimulated protein that positively regulates RNA virus-triggered innate immune signaling. Mechanistically, promotes 'Lys-27'-linked polyubiquitination of MAVS through TRIM21 leading to enhanced the IFN signaling pathway. The polypeptide is Ubiquitin-like protein 7 (UBL7) (Bos taurus (Bovine)).